The chain runs to 102 residues: Large ribosomal subunit protein bL28 (102 aa).

The protein belongs to the bacterial ribosomal protein bL28 family.

The polypeptide is Large ribosomal subunit protein bL28 (Bradyrhizobium diazoefficiens (strain JCM 10833 / BCRC 13528 / IAM 13628 / NBRC 14792 / USDA 110)).